The following is a 345-amino-acid chain: tRNA N6-adenosine threonylcarbamoyltransferase (345 aa).

Fe cation is bound by residues H109 and H113. Residues 136–140 (TVSGG), D169, G182, D186, and N284 contribute to the substrate site. Residue D312 coordinates Fe cation.

Belongs to the KAE1 / TsaD family. Fe(2+) is required as a cofactor.

It is found in the cytoplasm. It carries out the reaction L-threonylcarbamoyladenylate + adenosine(37) in tRNA = N(6)-L-threonylcarbamoyladenosine(37) in tRNA + AMP + H(+). Functionally, required for the formation of a threonylcarbamoyl group on adenosine at position 37 (t(6)A37) in tRNAs that read codons beginning with adenine. Is involved in the transfer of the threonylcarbamoyl moiety of threonylcarbamoyl-AMP (TC-AMP) to the N6 group of A37, together with TsaE and TsaB. TsaD likely plays a direct catalytic role in this reaction. This Chlorobium phaeovibrioides (strain DSM 265 / 1930) (Prosthecochloris vibrioformis (strain DSM 265)) protein is tRNA N6-adenosine threonylcarbamoyltransferase.